The following is a 251-amino-acid chain: 4-hydroxy-tetrahydrodipicolinate reductase (251 aa).

Residues 8–13, 76–78, and 106–109 contribute to the NAD(+) site; these read GAKGRM, GTT, and APNF. H136 acts as the Proton donor/acceptor in catalysis. H137 is a binding site for (S)-2,3,4,5-tetrahydrodipicolinate. K140 acts as the Proton donor in catalysis. 146–147 is a binding site for (S)-2,3,4,5-tetrahydrodipicolinate; the sequence is GT.

It belongs to the DapB family.

It is found in the cytoplasm. It carries out the reaction (S)-2,3,4,5-tetrahydrodipicolinate + NAD(+) + H2O = (2S,4S)-4-hydroxy-2,3,4,5-tetrahydrodipicolinate + NADH + H(+). The enzyme catalyses (S)-2,3,4,5-tetrahydrodipicolinate + NADP(+) + H2O = (2S,4S)-4-hydroxy-2,3,4,5-tetrahydrodipicolinate + NADPH + H(+). The protein operates within amino-acid biosynthesis; L-lysine biosynthesis via DAP pathway; (S)-tetrahydrodipicolinate from L-aspartate: step 4/4. Catalyzes the conversion of 4-hydroxy-tetrahydrodipicolinate (HTPA) to tetrahydrodipicolinate. In Bifidobacterium longum (strain NCC 2705), this protein is 4-hydroxy-tetrahydrodipicolinate reductase.